The sequence spans 141 residues: Large ribosomal subunit protein uL11 (141 aa).

This sequence belongs to the universal ribosomal protein uL11 family. Part of the ribosomal stalk of the 50S ribosomal subunit. Interacts with L10 and the large rRNA to form the base of the stalk. L10 forms an elongated spine to which L12 dimers bind in a sequential fashion forming a multimeric L10(L12)X complex. One or more lysine residues are methylated.

Forms part of the ribosomal stalk which helps the ribosome interact with GTP-bound translation factors. The chain is Large ribosomal subunit protein uL11 from Nostoc punctiforme (strain ATCC 29133 / PCC 73102).